The following is a 313-amino-acid chain: Acetaldehyde dehydrogenase (313 aa).

12–15 (SGNI) is an NAD(+) binding site. Residue C132 is the Acyl-thioester intermediate of the active site. NAD(+) is bound by residues 163-171 (SAGPGTRAN) and N291.

The protein belongs to the acetaldehyde dehydrogenase family.

It catalyses the reaction acetaldehyde + NAD(+) + CoA = acetyl-CoA + NADH + H(+). In Burkholderia cepacia (Pseudomonas cepacia), this protein is Acetaldehyde dehydrogenase (bphG).